Here is a 347-residue protein sequence, read N- to C-terminus: uncharacterized protein (347 aa).

10 consecutive transmembrane segments (helical) span residues 15 to 35, 46 to 66, 84 to 104, 111 to 131, 149 to 169, 182 to 202, 214 to 234, 249 to 269, 283 to 303, and 312 to 332; these read FVPS…DSLL, VAVG…VPWV, VLSA…ADFI, FWGG…SLIV, GWYI…LIMP, INYF…AVVI, AMAP…VALI, FYIF…MAII, AMSW…SHLV, and IDYI…ITLI.

It belongs to the tellurite-resistance/dicarboxylate transporter (TDT) family.

Its subcellular location is the cell membrane. This is an uncharacterized protein from Methanocaldococcus jannaschii (strain ATCC 43067 / DSM 2661 / JAL-1 / JCM 10045 / NBRC 100440) (Methanococcus jannaschii).